Here is a 208-residue protein sequence, read N- to C-terminus: Large ribosomal subunit protein bL25 (208 aa).

Low complexity predominate over residues Pro-186–Ala-201. Residues Pro-186 to Ala-208 are disordered.

It belongs to the bacterial ribosomal protein bL25 family. CTC subfamily. As to quaternary structure, part of the 50S ribosomal subunit; part of the 5S rRNA/L5/L18/L25 subcomplex. Contacts the 5S rRNA. Binds to the 5S rRNA independently of L5 and L18.

Its function is as follows. This is one of the proteins that binds to the 5S RNA in the ribosome where it forms part of the central protuberance. In Ralstonia pickettii (strain 12J), this protein is Large ribosomal subunit protein bL25.